The chain runs to 873 residues: DNA mismatch repair protein MutS (873 aa).

625-632 contributes to the ATP binding site; that stretch reads GPNMGGKS.

The protein belongs to the DNA mismatch repair MutS family.

In terms of biological role, this protein is involved in the repair of mismatches in DNA. It is possible that it carries out the mismatch recognition step. This protein has a weak ATPase activity. The protein is DNA mismatch repair protein MutS of Xanthomonas euvesicatoria pv. vesicatoria (strain 85-10) (Xanthomonas campestris pv. vesicatoria).